Here is a 173-residue protein sequence, read N- to C-terminus: Co-chaperone protein HscB homolog (173 aa).

The region spanning 5-77 is the J domain; the sequence is CHFAQFDLQP…PRRALYLLTL (73 aa).

It belongs to the HscB family. In terms of assembly, interacts with HscA and stimulates its ATPase activity.

Its function is as follows. Co-chaperone involved in the maturation of iron-sulfur cluster-containing proteins. Seems to help targeting proteins to be folded toward HscA. The protein is Co-chaperone protein HscB homolog of Pseudomonas paraeruginosa (strain DSM 24068 / PA7) (Pseudomonas aeruginosa (strain PA7)).